A 225-amino-acid polypeptide reads, in one-letter code: Ribonuclease HII (225 aa).

Positions 28–220 (DIIAGTDEVG…VKEYVDISQE (193 aa)) constitute an RNase H type-2 domain. A divalent metal cation-binding residues include D34, E35, and D129.

This sequence belongs to the RNase HII family. Requires Mn(2+) as cofactor. Mg(2+) is required as a cofactor.

The protein resides in the cytoplasm. It carries out the reaction Endonucleolytic cleavage to 5'-phosphomonoester.. Its function is as follows. Endonuclease that specifically degrades the RNA of RNA-DNA hybrids. This chain is Ribonuclease HII, found in Desulfotalea psychrophila (strain LSv54 / DSM 12343).